Here is a 250-residue protein sequence, read N- to C-terminus: UPF0259 membrane protein bbp_256 (250 aa).

6 consecutive transmembrane segments (helical) span residues 21–41 (PIIV…DSII), 86–106 (FSLL…IQMT), 125–145 (FFKL…GFLL), 146–166 (YFIP…ILLI), 188–208 (IIVP…LIIS), and 216–236 (FLAY…LIIY).

The protein belongs to the UPF0259 family.

It localises to the cell membrane. The chain is UPF0259 membrane protein bbp_256 from Buchnera aphidicola subsp. Baizongia pistaciae (strain Bp).